The primary structure comprises 475 residues: Ribulose bisphosphate carboxylase large chain (475 aa).

A propeptide spanning residues 1–2 is cleaved from the precursor; it reads MS. An N-acetylproline modification is found at Pro3. Lys14 is subject to N6,N6,N6-trimethyllysine. 2 residues coordinate substrate: Asn123 and Thr173. The active-site Proton acceptor is Lys175. Lys177 is a substrate binding site. 3 residues coordinate Mg(2+): Lys201, Asp203, and Glu204. Lys201 is modified (N6-carboxylysine). His294 (proton acceptor) is an active-site residue. Substrate contacts are provided by Arg295, His327, and Ser379.

Belongs to the RuBisCO large chain family. Type I subfamily. In terms of assembly, heterohexadecamer of 8 large chains and 8 small chains; disulfide-linked. The disulfide link is formed within the large subunit homodimers. Mg(2+) is required as a cofactor. The disulfide bond which can form in the large chain dimeric partners within the hexadecamer appears to be associated with oxidative stress and protein turnover.

The protein resides in the plastid. It is found in the chloroplast. It carries out the reaction 2 (2R)-3-phosphoglycerate + 2 H(+) = D-ribulose 1,5-bisphosphate + CO2 + H2O. The enzyme catalyses D-ribulose 1,5-bisphosphate + O2 = 2-phosphoglycolate + (2R)-3-phosphoglycerate + 2 H(+). Its function is as follows. RuBisCO catalyzes two reactions: the carboxylation of D-ribulose 1,5-bisphosphate, the primary event in carbon dioxide fixation, as well as the oxidative fragmentation of the pentose substrate in the photorespiration process. Both reactions occur simultaneously and in competition at the same active site. In Pinus krempfii (Krempf's pine), this protein is Ribulose bisphosphate carboxylase large chain.